The following is a 961-amino-acid chain: Translation initiation factor IF-2 (961 aa).

The segment covering 146–158 has biased composition (polar residues); the sequence is PSVPNKTLTTTPH. Residues 146-373 form a disordered region; the sequence is PSVPNKTLTT…KTTSQVTTQP (228 aa). The segment covering 163–176 has biased composition (basic and acidic residues); sequence NHSEKDVLESHDSS. Residues 177–187 show a composition bias toward low complexity; that stretch reads NKNIKQSSSQN. Basic and acidic residues predominate over residues 230–239; it reads SEEKNVDIQQ. Polar residues-rich tracts occupy residues 241 to 285 and 301 to 310; these read EIPS…TAPH and YQGQNRNNFI. Basic residues predominate over residues 355–364; that stretch reads NRGRKRHKQK. In terms of domain architecture, tr-type G spans 460–627; the sequence is RRPPVVTIMG…LLALQTDILE (168 aa). The G1 stretch occupies residues 469 to 476; that stretch reads GHVDHGKT. A GTP-binding site is contributed by 469–476; the sequence is GHVDHGKT. The G2 stretch occupies residues 494 to 498; sequence GITQH. Positions 515 to 518 are G3; sequence DTPG. GTP is bound by residues 515-519 and 569-572; these read DTPGH and NKMD. The segment at 569-572 is G4; it reads NKMD. The interval 605 to 607 is G5; it reads SAK.

It belongs to the TRAFAC class translation factor GTPase superfamily. Classic translation factor GTPase family. IF-2 subfamily.

The protein localises to the cytoplasm. One of the essential components for the initiation of protein synthesis. Protects formylmethionyl-tRNA from spontaneous hydrolysis and promotes its binding to the 30S ribosomal subunits. Also involved in the hydrolysis of GTP during the formation of the 70S ribosomal complex. This chain is Translation initiation factor IF-2, found in Lawsonia intracellularis (strain PHE/MN1-00).